The primary structure comprises 357 residues: CCN family member 3 (357 aa).

An N-terminal signal peptide occupies residues Met-1–Ala-31. The region spanning Thr-32 to Val-105 is the IGFBP N-terminal domain. 6 disulfides stabilise this stretch: Cys-35–Cys-61, Cys-39–Cys-63, Cys-43–Cys-64, Cys-50–Cys-67, Cys-75–Cys-89, and Cys-81–Cys-102. N-linked (GlcNAc...) asparagine glycosylation occurs at Asn-97. The region spanning Asp-108–Gly-174 is the VWFC domain. Residues Asn-205 to Glu-250 form the TSP type-1 domain. Residue Cys-244 is the site of S-palmitoyl cysteine attachment. Cystine bridges form between Cys-264-Cys-301, Cys-281-Cys-315, Cys-292-Cys-331, Cys-295-Cys-333, and Cys-300-Cys-337. One can recognise a CTCK domain in the interval Cys-264 to Pro-338. Asn-280 is a glycosylation site (N-linked (GlcNAc...) asparagine).

It belongs to the CCN family. In terms of assembly, interacts with FBLN1. Interacts (via CTCK domain) with NOTCH1 (via the EGF-like repeat region). Interacts with GJA1/CX43. Interacts with ITGA5:ITGB1, ITGAV:ITGB3 and ITGAV:ITGB5. Interacts with ZDHHC22; the interaction may lead to CCN3 palmitoylation. May be palmitoylated on Cys-244, which is important for extracellular secretion. Expressed in endothelial cells (at protein level). Expressed in bone marrow and thymic cells.

Its subcellular location is the secreted. It localises to the cytoplasm. It is found in the cell junction. The protein localises to the gap junction. Its function is as follows. Immediate-early protein playing a role in various cellular processes including proliferation, adhesion, migration, differentiation and survival. Acts by binding to integrins or membrane receptors such as NOTCH1. Essential regulator of hematopoietic stem and progenitor cell function. Inhibits myogenic differentiation through the activation of Notch-signaling pathway. Inhibits vascular smooth muscle cells proliferation by increasing expression of cell-cycle regulators such as CDKN2B or CDKN1A independently of TGFB1 signaling. Ligand of integrins ITGAV:ITGB3 and ITGA5:ITGB1, acts directly upon endothelial cells to stimulate pro-angiogenic activities and induces angiogenesis. In endothelial cells, supports cell adhesion, induces directed cell migration (chemotaxis) and promotes cell survival. Also plays a role in cutaneous wound healing acting as integrin receptor ligand. Supports skin fibroblast adhesion through ITGA5:ITGB1 and ITGA6:ITGB1 and induces fibroblast chemotaxis through ITGAV:ITGB5. Seems to enhance bFGF-induced DNA synthesis in fibroblasts. Involved in bone regeneration as a negative regulator. Enhances the articular chondrocytic phenotype, whereas it repressed the one representing endochondral ossification. Impairs pancreatic beta-cell function, inhibits beta-cell proliferation and insulin secretion. Plays a role as negative regulator of endothelial pro-inflammatory activation reducing monocyte adhesion, its anti-inflammatory effects occur secondary to the inhibition of NF-kappaB signaling pathway. Contributes to the control and coordination of inflammatory processes in atherosclerosis. Attenuates inflammatory pain through regulation of IL1B- and TNF-induced MMP9, MMP2 and CCL2 expression. Inhibits MMP9 expression through ITGB1 engagement. Brain osteoanabolic hormone. Drives osteogenesis in osteochondral skeletal stem cells. During lactation, maintains the maternal skeleton and viability of offspring. This is CCN family member 3 from Homo sapiens (Human).